The chain runs to 177 residues: Large ribosomal subunit protein uL6 (177 aa).

Belongs to the universal ribosomal protein uL6 family. As to quaternary structure, part of the 50S ribosomal subunit.

In terms of biological role, this protein binds to the 23S rRNA, and is important in its secondary structure. It is located near the subunit interface in the base of the L7/L12 stalk, and near the tRNA binding site of the peptidyltransferase center. This is Large ribosomal subunit protein uL6 from Natronomonas pharaonis (strain ATCC 35678 / DSM 2160 / CIP 103997 / JCM 8858 / NBRC 14720 / NCIMB 2260 / Gabara) (Halobacterium pharaonis).